We begin with the raw amino-acid sequence, 503 residues long: Maturase K (503 aa).

The protein belongs to the intron maturase 2 family. MatK subfamily.

It localises to the plastid. It is found in the chloroplast. In terms of biological role, usually encoded in the trnK tRNA gene intron. Probably assists in splicing its own and other chloroplast group II introns. The sequence is that of Maturase K from Backhousia subargentea (Giant ironwood).